The chain runs to 328 residues: Phosphoserine phosphatase (328 aa).

Residue aspartate 113 is the Nucleophile of the active site. Mg(2+)-binding residues include aspartate 113 and aspartate 115. Aspartate 115 functions as the Proton donor in the catalytic mechanism. Residues glutamate 122, arginine 158, 201–202 (SG), and lysine 246 each bind substrate. A Mg(2+)-binding site is contributed by aspartate 269. Asparagine 272 contacts substrate.

It belongs to the HAD-like hydrolase superfamily. SerB family. Mg(2+) serves as cofactor.

The catalysed reaction is O-phospho-L-serine + H2O = L-serine + phosphate. It catalyses the reaction O-phospho-D-serine + H2O = D-serine + phosphate. It participates in amino-acid biosynthesis; L-serine biosynthesis; L-serine from 3-phospho-D-glycerate: step 3/3. In Vibrio cholerae serotype O1 (strain ATCC 39315 / El Tor Inaba N16961), this protein is Phosphoserine phosphatase.